The primary structure comprises 139 residues: MRLTQGCFSFLPDLTDEQIEKQVACAMSRGLAMNVEWTDDPHPRNNYWELWGLPLFDIKDPATVMFELNEARKSCAAGYIRMNAFDASYGTESCVMSFITNRPVSEPGFYLDRTEGVGRQIVYSIKSYSVQANPEGSRY.

It belongs to the RuBisCO small chain family. As to quaternary structure, heterohexadecamer of 8 large and 8 small subunits.

The protein resides in the plastid. It is found in the chloroplast. Functionally, ruBisCO catalyzes two reactions: the carboxylation of D-ribulose 1,5-bisphosphate, the primary event in carbon dioxide fixation, as well as the oxidative fragmentation of the pentose substrate in the photorespiration process. Both reactions occur simultaneously and in competition at the same active site. Although the small subunit is not catalytic it is essential for maximal activity. In Detonula confervacea (Marine diatom), this protein is Ribulose bisphosphate carboxylase small subunit.